Consider the following 178-residue polypeptide: Protein Vhl (178 aa).

Belongs to the VHL family. In terms of assembly, part of a complex with Cul2, Roc1a/Rbx1 and the elongin BC complex. Interacts with sima/Hif1a. Interacts with itself. Interacts with mgr and betaTub56D/tubulin beta-1 chain. Interacts with tubulin alpha-beta heterodimers by itself or in complex with mgr. Interacts with microtubules (MTs).

It participates in protein modification; protein ubiquitination. Functionally, involved in development of tracheal vasculature. Probably involved in halting cell migration at the end of vascular tube outgrowth. Possesses E3 ubiquitin ligase activity when in complex with Elongin BC complex, Cul2 and Rox1a/Rbx1, and can target sima/Hif1a for ubiquitination. May play a critical role in promoting microtubule stabilization when tubulins are correctly folded by the prefoldin complex. If tubulin is incorrectly folded, may promote its degradation. This is Protein Vhl from Drosophila melanogaster (Fruit fly).